Reading from the N-terminus, the 315-residue chain is L-lactate dehydrogenase (315 aa).

NAD(+) is bound by residues valine 12, aspartate 33, and tyrosine 65. Residues glutamine 82, arginine 88, and 120-123 (NPVD) contribute to the substrate site. NAD(+) is bound by residues 118-120 (ISN) and serine 143. 148-151 (DTSR) contributes to the substrate binding site. 2 residues coordinate beta-D-fructose 1,6-bisphosphate: arginine 153 and histidine 168. Histidine 175 acts as the Proton acceptor in catalysis. Tyrosine 219 is subject to Phosphotyrosine. Threonine 228 contacts substrate.

It belongs to the LDH/MDH superfamily. LDH family. As to quaternary structure, homotetramer.

It is found in the cytoplasm. The enzyme catalyses (S)-lactate + NAD(+) = pyruvate + NADH + H(+). Its pathway is fermentation; pyruvate fermentation to lactate; (S)-lactate from pyruvate: step 1/1. With respect to regulation, allosterically activated by fructose 1,6-bisphosphate (FBP). In terms of biological role, catalyzes the conversion of lactate to pyruvate. This is L-lactate dehydrogenase from Mycoplasmopsis pulmonis (strain UAB CTIP) (Mycoplasma pulmonis).